Here is a 464-residue protein sequence, read N- to C-terminus: GTPase Der (464 aa).

EngA-type G domains are found at residues proline 3–serine 166 and leucine 177–threonine 350. GTP is bound by residues glycine 9–serine 16, aspartate 56–isoleucine 60, asparagine 118–aspartate 121, glycine 183–serine 190, aspartate 230–valine 234, and asparagine 295–aspartate 298. The KH-like domain maps to glutamate 351 to aspartate 435.

Belongs to the TRAFAC class TrmE-Era-EngA-EngB-Septin-like GTPase superfamily. EngA (Der) GTPase family. In terms of assembly, associates with the 50S ribosomal subunit.

Its function is as follows. GTPase that plays an essential role in the late steps of ribosome biogenesis. This chain is GTPase Der, found in Teredinibacter turnerae (strain ATCC 39867 / T7901).